We begin with the raw amino-acid sequence, 214 residues long: Pyridoxine/pyridoxamine 5'-phosphate oxidase (214 aa).

Substrate contacts are provided by residues 8 to 11 (RINY) and Lys66. FMN-binding positions include 61–66 (RIVLIK), 76–77 (FT), Arg82, Lys83, and Gln105. Substrate-binding residues include Tyr123, Arg127, and Ser131. FMN is bound by residues 140–141 (QS) and Trp184. 190–192 (RLH) is a binding site for substrate. An FMN-binding site is contributed by Arg194.

This sequence belongs to the pyridoxamine 5'-phosphate oxidase family. As to quaternary structure, homodimer. Requires FMN as cofactor.

The enzyme catalyses pyridoxamine 5'-phosphate + O2 + H2O = pyridoxal 5'-phosphate + H2O2 + NH4(+). It carries out the reaction pyridoxine 5'-phosphate + O2 = pyridoxal 5'-phosphate + H2O2. The protein operates within cofactor metabolism; pyridoxal 5'-phosphate salvage; pyridoxal 5'-phosphate from pyridoxamine 5'-phosphate: step 1/1. It participates in cofactor metabolism; pyridoxal 5'-phosphate salvage; pyridoxal 5'-phosphate from pyridoxine 5'-phosphate: step 1/1. Its function is as follows. Catalyzes the oxidation of either pyridoxine 5'-phosphate (PNP) or pyridoxamine 5'-phosphate (PMP) into pyridoxal 5'-phosphate (PLP). The chain is Pyridoxine/pyridoxamine 5'-phosphate oxidase from Burkholderia lata (strain ATCC 17760 / DSM 23089 / LMG 22485 / NCIMB 9086 / R18194 / 383).